A 455-amino-acid polypeptide reads, in one-letter code: Probable glycine dehydrogenase (decarboxylating) subunit 1 (455 aa).

The protein belongs to the GcvP family. N-terminal subunit subfamily. The glycine cleavage system is composed of four proteins: P, T, L and H. In this organism, the P 'protein' is a heterodimer of two subunits.

It carries out the reaction N(6)-[(R)-lipoyl]-L-lysyl-[glycine-cleavage complex H protein] + glycine + H(+) = N(6)-[(R)-S(8)-aminomethyldihydrolipoyl]-L-lysyl-[glycine-cleavage complex H protein] + CO2. Functionally, the glycine cleavage system catalyzes the degradation of glycine. The P protein binds the alpha-amino group of glycine through its pyridoxal phosphate cofactor; CO(2) is released and the remaining methylamine moiety is then transferred to the lipoamide cofactor of the H protein. This Francisella tularensis subsp. holarctica (strain LVS) protein is Probable glycine dehydrogenase (decarboxylating) subunit 1.